The primary structure comprises 200 residues: Charged multivesicular body protein 6-B (200 aa).

Gly2 carries the N-myristoyl glycine lipid modification. Residues 9-102 (RRSRVTEQDK…FAQIEMKVIE (94 aa)) are a coiled coil. The interval 165-200 (QEDLELPEAPSEPLSDTVPEKQAVKNRPKPQLVAAS) is disordered. A Type-2 MIT-interacting motif motif is present at residues 168–179 (LELPEAPSEPLS).

The protein belongs to the SNF7 family. In terms of assembly, probable core component of the endosomal sorting required for transport complex III (ESCRT-III). ESCRT-III components are thought to multimerize to form a flat lattice on the perimeter membrane of the endosome.

The protein resides in the endomembrane system. Its subcellular location is the late endosome membrane. Probable core component of the endosomal sorting required for transport complex III (ESCRT-III) which is involved in multivesicular bodies (MVBs) formation and sorting of endosomal cargo proteins into MVBs. MVBs contain intraluminal vesicles (ILVs) that are generated by invagination and scission from the limiting membrane of the endosome and mostly are delivered to lysosomes enabling degradation of membrane proteins, such as stimulated growth factor receptors, lysosomal enzymes and lipids. In the ESCRT-III complex, it probably serves as an acceptor for the ESCRT-II complex on endosomal membranes. The chain is Charged multivesicular body protein 6-B (chmp6-b) from Xenopus laevis (African clawed frog).